The primary structure comprises 430 residues: NEDD8-activating enzyme E1 catalytic subunit (430 aa).

Gly52 to Thr76 contributes to the ATP binding site. The active-site Glycyl thioester intermediate is the Cys211.

This sequence belongs to the ubiquitin-activating E1 family. UBA3 subfamily. Heterodimer of uba-3 and ula-1. Interacts with NEDD8 and ubc-12. Expressed in intestine, vulva epithelium and head and tail neurons.

The protein resides in the nucleus. It is found in the cytoplasm. It catalyses the reaction ATP + [NEDD8 protein] + [E1 NEDD8-activating enzyme]-L-cysteine = AMP + diphosphate + [E1 NEDD8-activating enzyme]-S-[NEDD8 protein]-yl-L-cysteine.. The protein operates within protein modification; protein neddylation. Its function is as follows. Catalytic subunit of the dimeric rfl-1 (uba-3)-ula-1 E1 enzyme. E1 activates NEDD8 by first adenylating its C-terminal glycine residue with ATP, thereafter linking this residue to the side chain of the catalytic cysteine, yielding a NEDD8-uba-3 thioester and free AMP. E1 finally transfers NEDD8 to the catalytic cysteine of ubc-12. Required for cytokinesis and mitotic spindle orientation during early embryogenesis. This chain is NEDD8-activating enzyme E1 catalytic subunit, found in Caenorhabditis elegans.